The chain runs to 251 residues: uncharacterized protein (251 aa).

Disordered stretches follow at residues 1–92 (MGRP…PGSA) and 137–251 (KPTP…LRTH). Positions 69 to 92 (AEGAPALLGGSPSSGSPGHPPGSA) are enriched in low complexity. The segment covering 155 to 172 (SESSWQLPQLPAGSTSGS) has biased composition (polar residues).

This is an uncharacterized protein from Homo sapiens (Human).